The following is a 104-amino-acid chain: Large ribosomal subunit protein uL24 (104 aa).

It belongs to the universal ribosomal protein uL24 family. As to quaternary structure, part of the 50S ribosomal subunit.

Its function is as follows. One of two assembly initiator proteins, it binds directly to the 5'-end of the 23S rRNA, where it nucleates assembly of the 50S subunit. One of the proteins that surrounds the polypeptide exit tunnel on the outside of the subunit. The polypeptide is Large ribosomal subunit protein uL24 (Shewanella amazonensis (strain ATCC BAA-1098 / SB2B)).